Consider the following 313-residue polypeptide: Olfactory receptor 5D18 (313 aa).

The Extracellular segment spans residues 1–26; that stretch reads MLLTDRNTSGTTFTLLGFSDYPELQV. Residue Asn-7 is glycosylated (N-linked (GlcNAc...) asparagine). Residues 27–47 form a helical membrane-spanning segment; that stretch reads PLFLVFLAIYNVTVLGNIGLI. At 48 to 55 the chain is on the cytoplasmic side; it reads VIIKINPK. The chain crosses the membrane as a helical span at residues 56–76; it reads LHTPMYFFLSQLSFVDFCYSS. Topologically, residues 77 to 100 are extracellular; sequence IIAPKMLVNLVVKDRTISFLGCVV. A disulfide bond links Cys-98 and Cys-190. The chain crosses the membrane as a helical span at residues 101 to 121; it reads QFFFFCTFVVTESFLLAVMAY. Topologically, residues 122 to 140 are cytoplasmic; it reads DRFVAICNPLLYTVNMSQK. The chain crosses the membrane as a helical span at residues 141 to 161; it reads LCVLLVVGSYAWGVSCSLELT. Topologically, residues 162 to 197 are extracellular; the sequence is CSALKLCFHGFNTINHFFCEFSSLLSLSCSDTYINQ. A helical transmembrane segment spans residues 198-218; it reads WLLFFLATFNEISTLLIVLTS. The Cytoplasmic segment spans residues 219–238; it reads YAFIVVTILKMRSVSGRRKA. A helical transmembrane segment spans residues 239-259; it reads FSTCASHLTAITIFHGTILFL. The Extracellular portion of the chain corresponds to 260 to 272; that stretch reads YCVPNSKNSRHTV. Residues 273 to 293 traverse the membrane as a helical segment; sequence KVASVFYTVVIPMLNPLIYSL. At 294 to 313 the chain is on the cytoplasmic side; the sequence is RNKDVKDTVTEILDTKVFSY.

Belongs to the G-protein coupled receptor 1 family.

It localises to the cell membrane. In terms of biological role, odorant receptor. The sequence is that of Olfactory receptor 5D18 (OR5D18) from Homo sapiens (Human).